Reading from the N-terminus, the 211-residue chain is Nucleoside triphosphate pyrophosphatase (211 aa).

The active-site Proton acceptor is the Asp76.

This sequence belongs to the Maf family. Requires a divalent metal cation as cofactor.

Its subcellular location is the cytoplasm. The enzyme catalyses a ribonucleoside 5'-triphosphate + H2O = a ribonucleoside 5'-phosphate + diphosphate + H(+). It catalyses the reaction a 2'-deoxyribonucleoside 5'-triphosphate + H2O = a 2'-deoxyribonucleoside 5'-phosphate + diphosphate + H(+). In terms of biological role, nucleoside triphosphate pyrophosphatase. May have a dual role in cell division arrest and in preventing the incorporation of modified nucleotides into cellular nucleic acids. This chain is Nucleoside triphosphate pyrophosphatase, found in Saccharopolyspora erythraea (strain ATCC 11635 / DSM 40517 / JCM 4748 / NBRC 13426 / NCIMB 8594 / NRRL 2338).